We begin with the raw amino-acid sequence, 248 residues long: MTRYKAIISYDGSGFFGYQVQPNTRTVQAEIEKALEKMHKGKSVRITASGRTDTGVHAKGQVIHFDSELDITAEKFQKALQVMTPFDISFLTVEEAPADFHARFGTVGKEYRYVIKRTKIFDPFSRNFALHYPYELDIAKMKQASERLIGEHDFTSFCSARTERDSKVRTLYSIDFYEEDAETLVIAFQGNGFLYNMVRILTGTLLDAGQGRISPDDITKALLAHDRQKLISKTAPPQGLYLWRVDYE.

The active-site Nucleophile is the aspartate 53. Tyrosine 111 serves as a coordination point for substrate.

It belongs to the tRNA pseudouridine synthase TruA family. As to quaternary structure, homodimer.

The enzyme catalyses uridine(38/39/40) in tRNA = pseudouridine(38/39/40) in tRNA. In terms of biological role, formation of pseudouridine at positions 38, 39 and 40 in the anticodon stem and loop of transfer RNAs. The chain is tRNA pseudouridine synthase A from Listeria innocua serovar 6a (strain ATCC BAA-680 / CLIP 11262).